The sequence spans 96 residues: Small ribosomal subunit protein bS6 (96 aa).

The protein belongs to the bacterial ribosomal protein bS6 family.

Its function is as follows. Binds together with bS18 to 16S ribosomal RNA. This is Small ribosomal subunit protein bS6 from Mycolicibacterium paratuberculosis (strain ATCC BAA-968 / K-10) (Mycobacterium paratuberculosis).